We begin with the raw amino-acid sequence, 144 residues long: Small ribosomal subunit protein uS19 (144 aa).

It belongs to the universal ribosomal protein uS19 family.

Functionally, protein S19 forms a complex with S13 that binds strongly to the 16S ribosomal RNA. The sequence is that of Small ribosomal subunit protein uS19 from Hyperthermus butylicus (strain DSM 5456 / JCM 9403 / PLM1-5).